Consider the following 527-residue polypeptide: Catalase (527 aa).

Residue Ala-2 is modified to N-acetylalanine. At Ser-9 the chain carries Phosphoserine. N6-succinyllysine is present on Lys-13. Residues His-75 and Asn-148 contribute to the active site. Residues His-194, Ser-201, Arg-203, and Asn-213 each contribute to the NADP(+) site. Position 221 is an N6-succinyllysine (Lys-221). Residue Lys-233 is modified to N6-acetyllysine. Residues Lys-237, Trp-303, His-305, and Lys-306 each contribute to the NADP(+) site. Lys-306 carries the post-translational modification N6-acetyllysine; alternate. Lys-306 is modified (N6-succinyllysine; alternate). A heme-binding site is contributed by Tyr-358. Phosphoserine occurs at positions 417 and 422. Lys-480 bears the N6-acetyllysine; alternate mark. An N6-succinyllysine; alternate modification is found at Lys-480. N6-acetyllysine is present on Lys-499. Residue Thr-511 is modified to Phosphothreonine. Ser-515 and Ser-517 each carry phosphoserine. A Microbody targeting signal; atypical motif is present at residues 524–527 (KANL).

The protein belongs to the catalase family. In terms of assembly, homotetramer. Interacts (via microbody targeting signal) with PEX5, monomeric form interacts with PEX5, leading to its translocation into peroxisomes. Heme is required as a cofactor. Requires NADP(+) as cofactor.

It is found in the peroxisome matrix. The catalysed reaction is 2 H2O2 = O2 + 2 H2O. Catalyzes the degradation of hydrogen peroxide (H(2)O(2)) generated by peroxisomal oxidases to water and oxygen, thereby protecting cells from the toxic effects of hydrogen peroxide. Promotes growth of cells including T-cells, B-cells, myeloid leukemia cells, melanoma cells, mastocytoma cells and normal and transformed fibroblast cells. The protein is Catalase (CAT) of Pongo abelii (Sumatran orangutan).